Here is a 581-residue protein sequence, read N- to C-terminus: MFLKYILASGICLVSLLSSTNAAPRHLYVKRYPVIYNASNITEVSNSTTVPPPPFVNTTAPNGTCLGNYNEYLPSGYYNATDRPKIHFTPSSGFMNDPNGLVYTGGVYHMFFQYSPKTLTAGEVHWGHTVSKDLIHWENYPIAIYPDEHENGVLSLPFSGSAVVDVHNSSGLFSNDTIPEERIVLIYTDHWTGVAERQAIAYTTDGGYTFKKYSGNPVLDINSLQFRDPKVIWDFDANRWVMIVAMSQNYGIAFYSSYDLIHWTELSVFSTSGYLGLQYECPGMARVPVEGTDEYKWVLFISINPGAPLGGSVVQYFVGDWNGTNFVPDDGQTRFVDLGKDFYASALYHSSSANADVIGVGWASNWQYTNQAPTQVFRSAMTVARKFTLRDVPQNPMTNLTSLIQTPLNVSLLRDETLFTAPVINSSSSLSGSPITLPSNTAFEFNVTLSINYTEGCTTGYCLGRIIIDSDDPYRLQSISVDVDFAASTLVINRAKAQMGWFNSLFTPSFANDIYIYGNVTLYGIVDNGLLELYVNNGEKTYTNDFFFLQGATPGQISFAAFQGVSFNNVTVTPLKTIWNC.

An N-terminal signal peptide occupies residues 1-22; the sequence is MFLKYILASGICLVSLLSSTNA. Residues N37, N40, N46, N57, N62, and N79 are each glycosylated (N-linked (GlcNAc...) asparagine). Residues 94–97, Q113, and 158–159 each bind substrate; these read FMND and FS. The active site involves D97. N-linked (GlcNAc...) asparagine glycans are attached at residues N168 and N175. Substrate-binding positions include 227–228 and E280; that span reads RD. N322 carries an N-linked (GlcNAc...) asparagine glycan. A substrate-binding site is contributed by W366. N-linked (GlcNAc...) asparagine glycosylation is found at N399, N409, N425, N446, N452, N519, and N569.

It belongs to the glycosyl hydrolase 32 family. Glycosylated; contains 67% carbohydrates. This is composed of equimolar amounts of mannose and galactose. There is also a small amount of glucosamine present.

It carries out the reaction Hydrolysis of terminal non-reducing beta-D-fructofuranoside residues in beta-D-fructofuranosides.. The chain is Invertase (inv1) from Schizosaccharomyces pombe (strain 972 / ATCC 24843) (Fission yeast).